Here is a 514-residue protein sequence, read N- to C-terminus: ATP synthase subunit alpha (514 aa).

170–177 (GDRQIGKT) lines the ATP pocket.

It belongs to the ATPase alpha/beta chains family. As to quaternary structure, F-type ATPases have 2 components, CF(1) - the catalytic core - and CF(0) - the membrane proton channel. CF(1) has five subunits: alpha(3), beta(3), gamma(1), delta(1), epsilon(1). CF(0) has three main subunits: a(1), b(2) and c(9-12). The alpha and beta chains form an alternating ring which encloses part of the gamma chain. CF(1) is attached to CF(0) by a central stalk formed by the gamma and epsilon chains, while a peripheral stalk is formed by the delta and b chains.

It localises to the cell inner membrane. It catalyses the reaction ATP + H2O + 4 H(+)(in) = ADP + phosphate + 5 H(+)(out). Produces ATP from ADP in the presence of a proton gradient across the membrane. The alpha chain is a regulatory subunit. This Alcanivorax borkumensis (strain ATCC 700651 / DSM 11573 / NCIMB 13689 / SK2) protein is ATP synthase subunit alpha.